A 162-amino-acid polypeptide reads, in one-letter code: Protein snakeskin (162 aa).

The Cytoplasmic portion of the chain corresponds to 2 to 6 (VSVET). The chain crosses the membrane as a helical span at residues 7–27 (VGSIFIKALKLIINLVIIFLY). Topologically, residues 28–53 (RWGDGGEFLGIGGTWNLNEEKSADAE) are extracellular. A helical membrane pass occupies residues 54–74 (IVASGVMVGFLIYTGCHTIAF). Topologically, residues 75-88 (AFGTTKHKGELCDT) are cytoplasmic. Residues 89–109 (IMNVVGCIMWIAVGGVALHYW) traverse the membrane as a helical segment. Residues 110–128 (KGYMSDEGFLYVNSERQVG) lie on the Extracellular side of the membrane. A helical membrane pass occupies residues 129–149 (IAMGSLCVIEGALYLLDTVLA). At 150-162 (CIHYSKGDTDYTQ) the chain is on the cytoplasmic side.

Forms a complex with Tsp2A and mesh. Interacts with mesh; the interaction may be necessary for the localization of both proteins to the cell apicolateral region.

The protein resides in the apicolateral cell membrane. Its subcellular location is the cell junction. It is found in the septate junction. Required for assembly of smooth septate junctions (sSJs), together with mesh and Tsp2A. May be important for barrier function of the midgut epithelium. The polypeptide is Protein snakeskin (Drosophila melanogaster (Fruit fly)).